The sequence spans 380 residues: Tryptophan 2,3-dioxygenase (380 aa).

Substrate contacts are provided by residues 57–61 and arginine 128; that span reads FIITH. Histidine 313 lines the heme pocket. Residue threonine 328 participates in substrate binding.

Belongs to the tryptophan 2,3-dioxygenase family. In terms of assembly, homotetramer. Dimer of dimers. Heme is required as a cofactor.

It catalyses the reaction L-tryptophan + O2 = N-formyl-L-kynurenine. It functions in the pathway amino-acid degradation; L-tryptophan degradation via kynurenine pathway; L-kynurenine from L-tryptophan: step 1/2. The protein operates within pigment biosynthesis; ommochrome biosynthesis. Its function is as follows. Heme-dependent dioxygenase that catalyzes the oxidative cleavage of the L-tryptophan (L-Trp) pyrrole ring and converts L-tryptophan to N-formyl-L-kynurenine. Catalyzes the oxidative cleavage of the indole moiety. This is Tryptophan 2,3-dioxygenase from Drosophila ananassae (Fruit fly).